We begin with the raw amino-acid sequence, 1142 residues long: DNA-directed RNA polymerase subunit beta N-terminal section (1142 aa).

Belongs to the RNA polymerase beta chain family. As to quaternary structure, in plastids the minimal PEP RNA polymerase catalytic core is composed of four subunits: alpha, beta, beta', and beta''. When a (nuclear-encoded) sigma factor is associated with the core the holoenzyme is formed, which can initiate transcription.

The protein resides in the plastid. The protein localises to the chloroplast. It catalyses the reaction RNA(n) + a ribonucleoside 5'-triphosphate = RNA(n+1) + diphosphate. In terms of biological role, DNA-dependent RNA polymerase catalyzes the transcription of DNA into RNA using the four ribonucleoside triphosphates as substrates. This Pleurastrum terricola (Filamentous green alga) protein is DNA-directed RNA polymerase subunit beta N-terminal section (rpoB1).